A 232-amino-acid polypeptide reads, in one-letter code: Ubiquinone biosynthesis O-methyltransferase (232 aa).

R36, G55, D76, and M120 together coordinate S-adenosyl-L-methionine.

It belongs to the methyltransferase superfamily. UbiG/COQ3 family.

The catalysed reaction is a 3-demethylubiquinol + S-adenosyl-L-methionine = a ubiquinol + S-adenosyl-L-homocysteine + H(+). It carries out the reaction a 3-(all-trans-polyprenyl)benzene-1,2-diol + S-adenosyl-L-methionine = a 2-methoxy-6-(all-trans-polyprenyl)phenol + S-adenosyl-L-homocysteine + H(+). It functions in the pathway cofactor biosynthesis; ubiquinone biosynthesis. O-methyltransferase that catalyzes the 2 O-methylation steps in the ubiquinone biosynthetic pathway. The chain is Ubiquinone biosynthesis O-methyltransferase from Burkholderia ambifaria (strain MC40-6).